Here is a 782-residue protein sequence, read N- to C-terminus: General transcription and DNA repair factor IIH helicase/translocase subunit XPB (782 aa).

Basic and acidic residues predominate over residues 1–11; sequence MGKRDRADRDK. Disordered regions lie at residues 1–51 and 218–241; these read MGKR…ESGT and SAIS…PQGK. Positions 6-18 match the Nuclear localization signal motif; that stretch reads RADRDKKKSRKRH. Residues 21-30 are compositionally biased toward acidic residues; it reads DEEDDEEDAP. Residues 218 to 236 are compositionally biased toward polar residues; it reads SAISKTAESSGGPSTSRVT. The region spanning 327–488 is the Helicase ATP-binding domain; the sequence is MFGNGRARSG…DLNFLIGPKL (162 aa). 340-347 is an ATP binding site; it reads LPCGAGKS. The short motif at 441–444 is the DEVH box element; sequence DEVH. The Helicase C-terminal domain maps to 542-702; it reads RACQFLIKFH…LAGMEEEDLA (161 aa). 2 residues coordinate ATP: R642 and R645. Position 686 is a phosphoserine (S686). S751 is subject to Phosphoserine; by CK2.

This sequence belongs to the helicase family. RAD25/XPB subfamily. In terms of assembly, component of the 7-subunit TFIIH core complex composed of XPB/ERCC3, XPD/ERCC2, GTF2H1, GTF2H2, GTF2H3, GTF2H4 and GTF2H5, which is active in NER. The core complex associates with the 3-subunit CDK-activating kinase (CAK) module composed of CCNH/cyclin H, CDK7 and MNAT1 to form the 10-subunit holoenzyme (holo-TFIIH) active in transcription. Interacts with PUF60. Interacts with ATF7IP. Interacts with KAT2A; leading to KAT2A recruitment to promoters and acetylation of histones. Part of TBP-based Pol II pre-initiation complex (PIC), in which Pol II core assembles with general transcription factors and other specific initiation factors including GTF2E1, GTF2E2, GTF2F1, GTF2F2, TCEA1, ERCC2, ERCC3, GTF2H2, GTF2H3, GTF2H4, GTF2H5, GTF2A1, GTF2A2, GTF2B and TBP; this large multi-subunit PIC complex mediates DNA unwinding and targets Pol II core to the transcription start site where the first phosphodiester bond forms. (Microbial infection) Interacts with Epstein-Barr virus EBNA2. In terms of processing, phosphorylation on Ser-751 by CK2 controls the 5'-excision activity of ERCC1-XPF endonuclease; phosphorylated protein inhibits the excision activity and thus NER. Dephosphorylation reactivates the 5'-excision step. Phosphorylation has no effect on transcription or the 3'-5' helicase activity.

It localises to the nucleus. It carries out the reaction Couples ATP hydrolysis with the unwinding of duplex DNA by translocating in the 3'-5' direction.. The enzyme catalyses ATP + H2O = ADP + phosphate + H(+). Phosphorylation on Ser-751 by CK2 controls the 5'-excision activity of ERCC1-XPF endonuclease; phosphorylated protein inhibits the excision activity and thus NER. ATPase activity is stimulated by TFIIH subunit p52 (GTF2H4). DNA translocase activity by this subunit in TFIIH is stimulated by XPA, ERCC5/XPG and XFP plus ERCC1; translocase activity is sensitive to triptolide which targets this enzyme. Its function is as follows. ATP-dependent 3'-5' DNA helicase/translocase. Binds dsDNA rather than ssDNA, unzipping it in a translocase rather than classical helicase activity. Component of the general transcription and DNA repair factor IIH (TFIIH) core complex. When complexed to CDK-activating kinase (CAK), involved in RNA transcription by RNA polymerase II. The ATPase activity of XPB/ERCC3, but not its helicase activity, is required for DNA opening; it may wrap around the damaged DNA wedging it open, causing localized melting that allows XPD/ERCC2 helicase to anchor. In transcription, TFIIH has an essential role in transcription initiation. When the pre-initiation complex (PIC) has been established, TFIIH is required for promoter opening and promoter escape. The ATP-dependent helicase activity of XPB/ERCC3 is required for promoter opening and promoter escape. In transcription pre-initiation complexes induces and propagates a DNA twist to open DNA. Also involved in transcription-coupled nucleotide excision repair (NER) of damaged DNA. In NER, TFIIH acts by opening DNA around the lesion to allow the excision of the damaged oligonucleotide and its replacement by a new DNA fragment. The structure of the TFIIH transcription complex differs from the NER-TFIIH complex; large movements by XPD/ERCC2 and XPB/ERCC3 are stabilized by XPA. XPA retains XPB/ERCC3 at the 5' end of a DNA bubble (mimicking DNA damage). This chain is General transcription and DNA repair factor IIH helicase/translocase subunit XPB, found in Homo sapiens (Human).